The following is a 396-amino-acid chain: Elongation factor Tu (396 aa).

One can recognise a tr-type G domain in the interval 10 to 206 (KPHCNIGTIG…QVDAYIPQPE (197 aa)). The tract at residues 19–26 (GHVDHGKT) is G1. 19-26 (GHVDHGKT) contacts GTP. Threonine 26 lines the Mg(2+) pocket. Positions 60-64 (GITIS) are G2. The tract at residues 81–84 (DCPG) is G3. Residues 81–85 (DCPGH) and 136–139 (NKCD) each bind GTP. A G4 region spans residues 136-139 (NKCD). Positions 174–176 (SAL) are G5.

This sequence belongs to the TRAFAC class translation factor GTPase superfamily. Classic translation factor GTPase family. EF-Tu/EF-1A subfamily. Monomer.

It localises to the cytoplasm. It catalyses the reaction GTP + H2O = GDP + phosphate + H(+). Its function is as follows. GTP hydrolase that promotes the GTP-dependent binding of aminoacyl-tRNA to the A-site of ribosomes during protein biosynthesis. This is Elongation factor Tu from Rhodopseudomonas palustris (strain ATCC BAA-98 / CGA009).